A 112-amino-acid polypeptide reads, in one-letter code: MSGKTVTRADLAESVFRKVGLSRTESAELVETVIDEICNAIVRGESVKLSSFATFQVRDKNERIGRNPKTGEEVPISPRRVMTFKASNVLKQRVLKAHLSRRAKQKQTGTAS.

Belongs to the bacterial histone-like protein family. In terms of assembly, heterodimer of an alpha and a beta chain.

Functionally, this protein is one of the two subunits of integration host factor, a specific DNA-binding protein that functions in genetic recombination as well as in transcriptional and translational control. The polypeptide is Integration host factor subunit alpha (Sinorhizobium fredii (strain NBRC 101917 / NGR234)).